A 103-amino-acid chain; its full sequence is Histone H4 (103 aa).

Gly residues predominate over residues 1–14 (MSGRGKGGKGLGKG). The disordered stretch occupies residues 1–20 (MSGRGKGGKGLGKGGAKRHR). The residue at position 2 (Ser2) is an N-acetylserine. N6-acetyl-N6-methyllysine; alternate is present on residues Lys6 and Lys13. Lys17 bears the N6-acetyllysine mark. Residues 17-21 (KRHRK) mediate DNA binding. Residue Lys21 is modified to N6-methyllysine.

The protein belongs to the histone H4 family. In terms of assembly, the nucleosome is a histone octamer containing two molecules each of H2A, H2B, H3 and H4 assembled in one H3-H4 heterotetramer and two H2A-H2B heterodimers. The octamer wraps approximately 147 bp of DNA.

It localises to the nucleus. Its subcellular location is the chromosome. In terms of biological role, core component of nucleosome. Nucleosomes wrap and compact DNA into chromatin, limiting DNA accessibility to the cellular machineries which require DNA as a template. Histones thereby play a central role in transcription regulation, DNA repair, DNA replication and chromosomal stability. DNA accessibility is regulated via a complex set of post-translational modifications of histones, also called histone code, and nucleosome remodeling. This chain is Histone H4, found in Holothuria tubulosa (Tubular sea cucumber).